We begin with the raw amino-acid sequence, 402 residues long: Secreted RxLR effector protein 73 (402 aa).

Positions 1–23 are cleaved as a signal peptide; that stretch reads MRLLHVVVATVSLTGAITSLIAA. The N-linked (GlcNAc...) asparagine glycan is linked to N27. The short motif at 104–107 is the RxLR element; sequence RVLR. 5 N-linked (GlcNAc...) asparagine glycosylation sites follow: N111, N134, N143, N165, and N286.

Belongs to the RxLR effector family.

It localises to the secreted. The protein resides in the host cell. Functionally, secreted effector that completely suppresses the host cell death induced by cell death-inducing proteins. The chain is Secreted RxLR effector protein 73 from Plasmopara viticola (Downy mildew of grapevine).